We begin with the raw amino-acid sequence, 435 residues long: Zinc finger CCCH domain-containing protein 67 (435 aa).

Positions 1–91 (MSKPEETSDP…DQKEEEEGSE (91 aa)) are disordered. C3H1-type zinc fingers lie at residues 101-129 (RPDS…HPVR), 148-176 (NPKL…HMKE), and 194-222 (RPGE…HPDP). Residues 235-274 (GNNGGSFSPKAPSQASSTSWSSTRHMNGTGTAPFIPSMFP) form a disordered region. A compositionally biased stretch (low complexity) spans 247-256 (SQASSTSWSS). 2 consecutive C3H1-type zinc fingers follow at residues 334–362 (RPDQ…HPKN) and 380–408 (RPDQ…HSIP). The segment at 412–435 (SPSSSQTVEARQVGANGNEDDSWH) is disordered.

It is found in the nucleus. This chain is Zinc finger CCCH domain-containing protein 67, found in Arabidopsis thaliana (Mouse-ear cress).